We begin with the raw amino-acid sequence, 98 residues long: Protein PROLINE CONTENT ALTERNATIVE 22 (98 aa).

As to expression, mainly expressed in flowers, to a lower extent, in roots and, at very low levels, in leaves and stems.

Its subcellular location is the cytoplasm. Functionally, acts as an opponent to RZF1 during early seedling growth in term of proline accumulation in response to dehydration and abscisic acid (ABA). Confers sensitivity to abiotic stresses such as ABA, drought and osmotic stress (e.g. mannitol treatment) by preventing proline accumulation and by reducing the expression of dehydration-inducible genes. Promotes the production of lipid peroxidation by drought stress thus leading to malondialdehyde (MDA) synthesis. Prevents pollen tube elongation. Necessary for RZF1 expression in seedlings. This chain is Protein PROLINE CONTENT ALTERNATIVE 22, found in Arabidopsis thaliana (Mouse-ear cress).